The sequence spans 175 residues: Methylmalonyl-CoA epimerase, mitochondrial (175 aa).

The N-terminal 35 residues, 1 to 35 (MARVLKVAAASAAGLFPRLRTPVSTVRTSASLSSH), are a transit peptide targeting the mitochondrion. One can recognise a VOC domain in the interval 46 to 175 (RLNHVAVAVP…GGVLVELEQA (130 aa)). Position 49 (histidine 49) interacts with Co(2+). The residue at position 113 (lysine 113) is an N6-succinyllysine. Residue histidine 121 participates in Co(2+) binding. N6-acetyllysine; alternate is present on lysine 149. Residue lysine 149 is modified to N6-succinyllysine; alternate. Glutamate 171 serves as a coordination point for Co(2+).

The protein belongs to the methylmalonyl-CoA epimerase family.

The protein localises to the mitochondrion. The enzyme catalyses (R)-methylmalonyl-CoA = (S)-methylmalonyl-CoA. Methylmalonyl-CoA epimerase involved in propionyl-CoA metabolism. The chain is Methylmalonyl-CoA epimerase, mitochondrial (MCEE) from Bos taurus (Bovine).